We begin with the raw amino-acid sequence, 131 residues long: DNA-directed RNA polymerase subunit omega (131 aa).

Belongs to the RNA polymerase subunit omega family. The RNAP catalytic core consists of 2 alpha, 1 beta, 1 beta' and 1 omega subunit. When a sigma factor is associated with the core the holoenzyme is formed, which can initiate transcription.

It catalyses the reaction RNA(n) + a ribonucleoside 5'-triphosphate = RNA(n+1) + diphosphate. Functionally, promotes RNA polymerase assembly. Latches the N- and C-terminal regions of the beta' subunit thereby facilitating its interaction with the beta and alpha subunits. The polypeptide is DNA-directed RNA polymerase subunit omega (Chelativorans sp. (strain BNC1)).